A 335-amino-acid chain; its full sequence is Spike protein P1 (335 aa).

In terms of assembly, monomer.

Its subcellular location is the virion. In terms of biological role, receptor binding protein located at the fivefold vertices. This Pseudoalteromonas espejiana (Bacteriophage PM2) protein is Spike protein P1 (I).